The sequence spans 521 residues: Probable cytochrome P450 12d1 proximal, mitochondrial (521 aa).

Residues 1 to 19 (MNTLSSARSVAIYVGPVRS) constitute a mitochondrion transit peptide. Cys-467 lines the heme pocket.

This sequence belongs to the cytochrome P450 family. Heme is required as a cofactor.

The protein resides in the mitochondrion membrane. The sequence is that of Probable cytochrome P450 12d1 proximal, mitochondrial (Cyp12d1-p) from Drosophila melanogaster (Fruit fly).